A 4835-amino-acid chain; its full sequence is Midasin (4835 aa).

6 AAA-ATPase protomer regions span residues 12-161, 324-689, 797-1049, 1096-1375, 1489-1738, and 1821-2110; these read EVLR…PLVL, RSLD…HRFR, MTTI…AEII, KFQD…DYIT, APTT…FGYR, and ALEA…SIDI. Residues 31 to 38, 356 to 363, 814 to 821, 1127 to 1134, 1513 to 1520, and 1839 to 1846 each bind ATP; these read GPSASGRT, GPTGIGKT, GTTSSGKT, GVSGAGKT, GDPGVGKS, and GSPESGKS. Positions 2197 to 4058 are linker; that stretch reads SVFIASTLNA…DGTGDQNVSK (1862 aa). Disordered stretches follow at residues 4033–4056 and 4108–4523; these read DQKETDNDNQSGLGLGDGTGDQNV and IEEE…LLNP. Acidic residues-rich tracts occupy residues 4109–4133, 4141–4150, 4226–4241, 4282–4291, and 4315–4330; these read EEEDSNGSDEEEVLEKEMGDEQGEA, EDDDSAEEYS, ADGEDETVNEELEEEQ, VDIDDNEASD, and NDEEEMQKDTEYDQEN. Residues 4331–4346 show a composition bias toward polar residues; the sequence is ITDSNPDANEVGTNDQ. Basic and acidic residues-rich tracts occupy residues 4347-4360, 4394-4415, and 4429-4438; these read KQTHEDNDQFRQEN, EFQRIWKERLNIHDRESEKDEA, and VEFDDSKSGR. Residues 4468-4477 show a composition bias toward polar residues; the sequence is HNSSCETSQS. Positions 4478–4488 are enriched in basic and acidic residues; that stretch reads SHDRPPAEHLN. The VWFA domain maps to 4629-4818; it reads QVLLAVDDSS…RHIEDLPETL (190 aa).

Belongs to the midasin family. In terms of assembly, associates with pre-60S ribosomes in the nucleoplasm.

Its subcellular location is the nucleus. The protein localises to the nucleolus. It is found in the nucleoplasm. Its function is as follows. Nuclear chaperone required for maturation and nuclear export of pre-60S ribosome subunits. Functions at successive maturation steps to remove ribosomal factors at critical transition points, first driving the exit of early pre-60S particles from the nucleolus and then driving late pre-60S particles from the nucleus. This is Midasin (MDN1) from Giardia intestinalis (Giardia lamblia).